Reading from the N-terminus, the 159-residue chain is Nucleotide-binding protein PST_3153 (159 aa).

This sequence belongs to the YajQ family.

Functionally, nucleotide-binding protein. In Stutzerimonas stutzeri (strain A1501) (Pseudomonas stutzeri), this protein is Nucleotide-binding protein PST_3153.